The following is a 118-amino-acid chain: Putative pterin-4-alpha-carbinolamine dehydratase (118 aa).

Belongs to the pterin-4-alpha-carbinolamine dehydratase family.

It catalyses the reaction (4aS,6R)-4a-hydroxy-L-erythro-5,6,7,8-tetrahydrobiopterin = (6R)-L-erythro-6,7-dihydrobiopterin + H2O. The chain is Putative pterin-4-alpha-carbinolamine dehydratase from Xanthomonas oryzae pv. oryzae (strain MAFF 311018).